The sequence spans 128 residues: MTRIKRGYIARRRIKKFRLFASSFLNAHSRLTRTITQQKIRALVSSDRDRNNKKRKFRSLWITRINAVIREEGVSYSYKNFIYAQYKIQLLINRKILAQIAILNRNFFYMIFNEIRKEADLKEYIRIN.

It belongs to the bacterial ribosomal protein bL20 family.

It localises to the plastid. In terms of biological role, binds directly to 23S ribosomal RNA and is necessary for the in vitro assembly process of the 50S ribosomal subunit. It is not involved in the protein synthesizing functions of that subunit. The sequence is that of Large ribosomal subunit protein bL20c (rpl20) from Epifagus virginiana (Beechdrops).